A 177-amino-acid polypeptide reads, in one-letter code: Peroxiredoxin-2 (177 aa).

Alanine 2 is modified (N-acetylalanine). Residues 6–164 (ARIGKPAPDF…ALRLVQAFQY (159 aa)) form the Thioredoxin domain. Cysteine 51 (cysteine sulfenic acid (-SOH) intermediate) is an active-site residue. The residue at position 112 (serine 112) is a Phosphoserine.

It belongs to the peroxiredoxin family. AhpC/Prx1 subfamily. As to quaternary structure, homodimer; disulfide-linked, upon oxidation. 5 homodimers assemble to form a ring-like decamer. Interacts with TIPIN. In terms of processing, the enzyme can be inactivated by further oxidation of the cysteine sulfenic acid (C(P)-SOH) to sulphinic acid (C(P)-SO2H) instead of its condensation to a disulfide bond. It can be reactivated by forming a transient disulfide bond with sulfiredoxin SRXN1, which reduces the cysteine sulfinic acid in an ATP- and Mg-dependent manner. Post-translationally, acetylation increases resistance to transition to high molecular-mass complexes. Deacetylated by HDAC6 which decreases reducing activity.

Its subcellular location is the cytoplasm. The enzyme catalyses a hydroperoxide + [thioredoxin]-dithiol = an alcohol + [thioredoxin]-disulfide + H2O. Its function is as follows. Thiol-specific peroxidase that catalyzes the reduction of hydrogen peroxide and organic hydroperoxides to water and alcohols, respectively. Plays a role in cell protection against oxidative stress by detoxifying peroxides and as sensor of hydrogen peroxide-mediated signaling events. Might participate in the signaling cascades of growth factors and tumor necrosis factor-alpha by regulating the intracellular concentrations of H(2)O(2). The polypeptide is Peroxiredoxin-2 (PRDX2) (Pongo abelii (Sumatran orangutan)).